The following is a 423-amino-acid chain: Histidine--tRNA ligase (423 aa).

This sequence belongs to the class-II aminoacyl-tRNA synthetase family. As to quaternary structure, homodimer.

It is found in the cytoplasm. The enzyme catalyses tRNA(His) + L-histidine + ATP = L-histidyl-tRNA(His) + AMP + diphosphate + H(+). This chain is Histidine--tRNA ligase, found in Haemophilus influenzae (strain PittEE).